A 462-amino-acid chain; its full sequence is Glycine--tRNA ligase (462 aa).

The substrate site is built by Arg100 and Glu170. ATP is bound by residues 202 to 204, 212 to 217, 287 to 288, and 331 to 334; these read RNE, FRTREF, EL, and GVER. 217–221 contacts substrate; sequence FEQME. 327–331 lines the substrate pocket; it reads EPSVG.

The protein belongs to the class-II aminoacyl-tRNA synthetase family. Homodimer.

The protein localises to the cytoplasm. It carries out the reaction tRNA(Gly) + glycine + ATP = glycyl-tRNA(Gly) + AMP + diphosphate. In terms of biological role, catalyzes the attachment of glycine to tRNA(Gly). The chain is Glycine--tRNA ligase from Malacoplasma penetrans (strain HF-2) (Mycoplasma penetrans).